The following is a 340-amino-acid chain: Zinc finger protein 367 (340 aa).

The interval 96 to 140 (LPTLRGAPPSSASVAAVSGGEDEEEASSPDSGHLKDGIRRGRPRA) is disordered. Over residues 101–114 (GAPPSSASVAAVSG) the composition is skewed to low complexity. Positions 127-140 (GHLKDGIRRGRPRA) are enriched in basic and acidic residues. 2 consecutive C2H2-type zinc fingers follow at residues 157 to 179 (IRCN…KRTH) and 185 to 209 (YLCD…QRLH). Residues 280 to 317 (KGKLVQKADQEQQDPLEYLQSDEEDDEKSGAQRRLQEQ) form a disordered region. Residues 299–332 (QSDEEDDEKSGAQRRLQEQRERLHGALALIELAN) adopt a coiled-coil conformation. Ser-300 bears the Phosphoserine mark. Residues 307–317 (KSGAQRRLQEQ) are compositionally biased toward basic and acidic residues.

This sequence belongs to the krueppel C2H2-type zinc-finger protein family.

Its subcellular location is the nucleus. Functionally, transcriptional activator. May be involved in transcriptional activation of erythroid genes. In Rattus norvegicus (Rat), this protein is Zinc finger protein 367 (Znf367).